The chain runs to 179 residues: Large ribosomal subunit protein uL6 (179 aa).

This sequence belongs to the universal ribosomal protein uL6 family. Part of the 50S ribosomal subunit.

Its function is as follows. This protein binds to the 23S rRNA, and is important in its secondary structure. It is located near the subunit interface in the base of the L7/L12 stalk, and near the tRNA binding site of the peptidyltransferase center. The chain is Large ribosomal subunit protein uL6 from Treponema pallidum (strain Nichols).